The sequence spans 727 residues: MPPPSDIVKVAIEWPGAYPKLMEIDQKKPLSAIIKEVCDGWSLANHEYFALQHADSSNFYITEKNRNEIKNGTILRLTTSPAQNAQQLHERIQSSSMDAKLEALKDLASLSRDVTFAQEFINLDGISLLTQMVESGTERYQKLQKIMKPCFGDMLSFTLTAFVELMDHGIVSWDTFSVAFIKKIASFVNKSAIDISILQRSLAILESMVLNSHDLYQKVAQEITIGQLIPHLQGTDQEIQTYTIAVINALFLKAPDERRQEMANILAQKQLRYIILTHVIRAQRAINNEMAHQLYVLQVLTFNLLEDRMMTKMDPQDQAQRDIIFELRRIAFDAESEPNNSSGSMEKRKSMYTRDYKKLGFINHVNPAMDFTQTPPGMLALDNMLYFAKHHQDAYIRIVLENSSREDKHECPFGRSSIELTKMLCEILKVGELPSETCNDFHPMFFTHDRSFEEFFCICIQLLNKTWKEMRATSEDFNKVMQVVKEQVMRALTTKPSSLDQFKSKLQNLSYTEILKIRQSERMNQEDFQSRPILELKEKIQPEILELIKQQRLNRLVEGTCFRKLNARRRQDKFWYCRLSPNHKVLHYGDLEESPQGEVPHDSLQDKLPVADIKAVVTGKDCPHMKEKGALKQNKEVLELAFSILYDSNCQLNFIAPDKHEYCIWTDGLNALLGKDMMSDLTRNDLDTLLSMEIKLRLLDLENIQIPDAPPPIPKEPSNYDFVYDCN.

Y18 carries the phosphotyrosine; by HCK modification. N6-acetyllysine is present on residues K100 and K105. Residue Y216 is modified to Phosphotyrosine; by HCK. Positions 319–492 (AQRDIIFELR…VVKEQVMRAL (174 aa)) constitute an ELMO domain. A Phosphoserine modification is found at S344. Residues Y395 and Y511 each carry the phosphotyrosine; by HCK modification. Positions 555–676 (RLVEGTCFRK…DGLNALLGKD (122 aa)) constitute a PH domain. The SH3-binding motif lies at 707 to 714 (PDAPPPIP). Phosphotyrosine; by HCK is present on Y720.

As to quaternary structure, interacts directly with the SH3-domain of DOCK1 via its SH3-binding site. Probably forms a heterotrimeric complex with DOCK1 and RAC1. Interacts with PLEKHG6. Interacts with HCK (via SH3 domain). Interacts with ADGRB1. Interacts with ADGRB3. Interacts with DOCK5. Phosphorylated by HCK.

Its subcellular location is the cytoplasm. It is found in the cell membrane. Functionally, involved in cytoskeletal rearrangements required for phagocytosis of apoptotic cells and cell motility. Acts in association with DOCK1 and CRK. Was initially proposed to be required in complex with DOCK1 to activate Rac Rho small GTPases. May enhance the guanine nucleotide exchange factor (GEF) activity of DOCK1. In Mus musculus (Mouse), this protein is Engulfment and cell motility protein 1 (Elmo1).